A 721-amino-acid polypeptide reads, in one-letter code: MQEPAITPEVIENHGLKPDEYDLILEIIGREPTFTELGIFSAMWNEHCSYKSSKKWLRTLPTSGPQVICGPGENAGIVDIGDGDAVVFKMESHNHPSYIEPYQGAATGVGGILRDVFTMGARPIASMNSLSFGEPAHHKTRQLVNGVVEGVGGYGNCFGVPCVGGEVRFHPAYNGNCLVNAFAAGLVKTDMIFYSAASGVGMPVVYLGAKTGRDGVGGATMASAEFDDTIEEKRPTVQVGDPFTEKRLMEATLELMQTGAVISIQDMGAAGLTCSAVEMGDKGGLGVRLDLEKVPQREENMTAYEMMLSESQERMLMVLKPELEAEAKAVFEKWDLDFAIVGETIAEDRFLIMHNGEVKADLPLSKLSSSAPEYDRPWIEVEAPAALTDADVPTIDPIDGLKALISSPNYAGKQWVYEQYDTTVMGDTARRPGLGGGMVRVHGTDKKLAFTSDVTPRYVKANPVEGGKQAVAEAYRNLCAVGAKPLATTDNLNFGNPEKPEIMGQFVGALKGIGEAVSALDMPIVSGNVSLYNETDGQAILPTPTIGAVGLVAAGEEPILGEARDGHVLLLVGETIGHLGQSALLHEVFNREDGDAPAVDLEIEKRNGEFIRNNRDFIKACTDISDGGLALAAFELAEAAGVGVQIDASDTPTLFGEDQARYLVACNFDQAEALMIAAGQAGVPLETVGKFTGDTVKMGGSEATLEELSQIFRTSFAEAVA.

His47 is an active-site residue. Residues Tyr50 and Lys89 each contribute to the ATP site. Residue Glu91 coordinates Mg(2+). Substrate-binding positions include 92 to 95 (SHNH) and Arg114. Residue His93 is the Proton acceptor of the active site. Residue Asp115 participates in Mg(2+) binding. A substrate-binding site is contributed by Gln238. Mg(2+) is bound at residue Asp266. Residue 310 to 312 (ESQ) participates in substrate binding. Residues Asp490 and Gly527 each coordinate ATP. Residue Asn528 participates in Mg(2+) binding. Ser530 provides a ligand contact to substrate.

This sequence belongs to the FGAMS family. Monomer. Part of the FGAM synthase complex composed of 1 PurL, 1 PurQ and 2 PurS subunits.

Its subcellular location is the cytoplasm. The catalysed reaction is N(2)-formyl-N(1)-(5-phospho-beta-D-ribosyl)glycinamide + L-glutamine + ATP + H2O = 2-formamido-N(1)-(5-O-phospho-beta-D-ribosyl)acetamidine + L-glutamate + ADP + phosphate + H(+). Its pathway is purine metabolism; IMP biosynthesis via de novo pathway; 5-amino-1-(5-phospho-D-ribosyl)imidazole from N(2)-formyl-N(1)-(5-phospho-D-ribosyl)glycinamide: step 1/2. In terms of biological role, part of the phosphoribosylformylglycinamidine synthase complex involved in the purines biosynthetic pathway. Catalyzes the ATP-dependent conversion of formylglycinamide ribonucleotide (FGAR) and glutamine to yield formylglycinamidine ribonucleotide (FGAM) and glutamate. The FGAM synthase complex is composed of three subunits. PurQ produces an ammonia molecule by converting glutamine to glutamate. PurL transfers the ammonia molecule to FGAR to form FGAM in an ATP-dependent manner. PurS interacts with PurQ and PurL and is thought to assist in the transfer of the ammonia molecule from PurQ to PurL. This Ruegeria sp. (strain TM1040) (Silicibacter sp.) protein is Phosphoribosylformylglycinamidine synthase subunit PurL.